We begin with the raw amino-acid sequence, 420 residues long: Acetyl-CoA acetyltransferase A, mitochondrial (420 aa).

A mitochondrion-targeting transit peptide spans 1-33 (MAFCGTRTAARLSHSTRALHNTHRNFASQRTLN). Cysteine 119 acts as the Acyl-thioester intermediate in catalysis. CoA contacts are provided by residues tyrosine 212, 251 to 253 (RVD), and lysine 256. Tyrosine 212 is a binding site for K(+). K(+) contacts are provided by alanine 273 and alanine 274. Serine 277 serves as a coordination point for CoA. Valine 374 serves as a coordination point for K(+). The active-site Proton donor/acceptor is cysteine 406.

It belongs to the thiolase-like superfamily. Thiolase family. Homotetramer.

Its subcellular location is the mitochondrion. The catalysed reaction is 2 acetyl-CoA = acetoacetyl-CoA + CoA. It carries out the reaction propanoyl-CoA + acetyl-CoA = 2-methyl-3-oxobutanoyl-CoA + CoA. It participates in lipid metabolism; fatty acid beta-oxidation. Its function is as follows. This is one of the enzymes that catalyzes the last step of the mitochondrial beta-oxidation pathway, an aerobic process breaking down fatty acids into acetyl-CoA. Using free coenzyme A/CoA, catalyzes the thiolytic cleavage of medium- to long-chain 3-oxoacyl-CoAs into acetyl-CoA and a fatty acyl-CoA shortened by two carbon atoms. The activity of the enzyme is reversible and it can also catalyze the condensation of two acetyl-CoA molecules into acetoacetyl-CoA. Thereby, it plays a major role in ketone body metabolism. This Xenopus laevis (African clawed frog) protein is Acetyl-CoA acetyltransferase A, mitochondrial (acat1-a).